The following is a 394-amino-acid chain: ORC1-type DNA replication protein 3 (394 aa).

Residues 66–70 (TGKTF) and Tyr207 each bind ATP.

The protein belongs to the CDC6/cdc18 family. In terms of assembly, monomer. Interacts with Cdc6-1, Cdc6-2, MCM and PolB1.

Involved in regulation of DNA replication. May play essential roles in origin recognition and cell cycle control of replication. Binds to DNA, with a preference for molecules that contain a bubble, a fork, or a tail. Inhibits the binding of the MCM helicase to the origin DNA and inhibits its DNA helicase activity. Also regulates the DNA polymerase and the nuclease activities of PolB1. Inhibits the DNA-binding activity of Cdc6-1 and Cdc6-2. In Saccharolobus solfataricus (strain ATCC 35092 / DSM 1617 / JCM 11322 / P2) (Sulfolobus solfataricus), this protein is ORC1-type DNA replication protein 3 (cdc6-3).